The sequence spans 1536 residues: Alpha-2-macroglobulin (1536 aa).

Positions 1–23 are cleaved as a signal peptide; sequence MGMKRLIFLVFLLISFSLFGGYA. A cross-link (isoglutamyl cysteine thioester (Cys-Gln)) is located at residues 919–922; that stretch reads CVEQ.

It belongs to the protease inhibitor I39 (alpha-2-macroglobulin) family. Bacterial alpha-2-macroglobulin subfamily.

Its function is as follows. Protects the bacterial cell from peptidases. The sequence is that of Alpha-2-macroglobulin from Thermotoga maritima (strain ATCC 43589 / DSM 3109 / JCM 10099 / NBRC 100826 / MSB8).